Here is a 259-residue protein sequence, read N- to C-terminus: Global transcriptional regulator CodY (259 aa).

Positions 1-155 (MNLLEKTRQL…SATVVGMEIL (155 aa)) are GAF domain. Positions 203 to 222 (ASKIADRVGITRSVIVNALR) form a DNA-binding region, H-T-H motif.

The protein belongs to the CodY family.

The protein resides in the cytoplasm. Its function is as follows. DNA-binding global transcriptional regulator which is involved in the adaptive response to starvation and acts by directly or indirectly controlling the expression of numerous genes in response to nutrient availability. During rapid exponential growth, CodY is highly active and represses genes whose products allow adaptation to nutrient depletion. The chain is Global transcriptional regulator CodY from Exiguobacterium sp. (strain ATCC BAA-1283 / AT1b).